Here is a 204-residue protein sequence, read N- to C-terminus: VQ motif-containing protein 13 (204 aa).

A compositionally biased stretch (basic and acidic residues) spans 1–12 (MEKSPRYRDKAK). Residues 1–26 (MEKSPRYRDKAKNLLPSPSSCTTTPT) are disordered. The segment covering 16-26 (PSPSSCTTTPT) has biased composition (low complexity). Residue Ser17 is modified to Phosphoserine. The VQ motif lies at 46 to 55 (FKQVVQLLTG). The disordered stretch occupies residues 56–90 (IPKNPTHQPDPRFPPFHSIPPIKAVTNKKQSSSFR). A phosphoserine mark is found at Ser73 and Ser128. Residue Thr131 is modified to Phosphothreonine. Residues 133 to 204 (LMSDPFYRPG…HSPAPSPHDH (72 aa)) are disordered. Positions 143 to 152 (SFSQSPSDSK) are enriched in low complexity. Phosphoserine is present on residues Ser147 and Ser173. A phosphothreonine mark is found at Thr177 and Thr192. Ser196 and Ser200 each carry phosphoserine.

Phosphorylated on serine and threonine residues by MPK6.

It is found in the nucleus. May modulate WRKY transcription factor activities. In Arabidopsis thaliana (Mouse-ear cress), this protein is VQ motif-containing protein 13.